The sequence spans 311 residues: Malate dehydrogenase (311 aa).

NAD(+)-binding positions include 7-13 and Asp-34; that span reads GAAGGIG. Substrate is bound by residues Arg-81 and Arg-87. Residues Asn-94 and 117–119 each bind NAD(+); that span reads ITN. 2 residues coordinate substrate: Asn-119 and Arg-153. His-177 serves as the catalytic Proton acceptor. Met-227 provides a ligand contact to NAD(+).

Belongs to the LDH/MDH superfamily. MDH type 1 family. In terms of assembly, homodimer.

The catalysed reaction is (S)-malate + NAD(+) = oxaloacetate + NADH + H(+). Functionally, catalyzes the reversible oxidation of malate to oxaloacetate. This chain is Malate dehydrogenase, found in Haemophilus influenzae (strain PittEE).